A 385-amino-acid polypeptide reads, in one-letter code: WD repeat-containing protein RUP1 (385 aa).

WD repeat units lie at residues 69–108 (TGSD…ESRD), 119–160 (CTPA…PVSE), 163–205 (EHGG…TLEE), 210–250 (GGGA…DPLI), 254–292 (GHTK…RVVR), 298–337 (VNSR…PVWV), and 348–385 (SDRR…GKQS).

Interacts with UVR8. Interacts directly with DHU1.

It is found in the nucleus. The protein localises to the cytoplasm. Its subcellular location is the cytosol. Functions in association with RUP2 as repressor of UV-B-induced photomorphogenesis mediated by UVR8 and HY5, likely in coordination with DHU1. Plays a crucial negative feedback regulatory role downstream of UVR8-COP1 to inhibit UVR8 function, balance UV-B-specific responses and ensure normal plant growth. Is involved in the regulation of photoperiodic flowering and vegetative development. This chain is WD repeat-containing protein RUP1, found in Arabidopsis thaliana (Mouse-ear cress).